A 185-amino-acid polypeptide reads, in one-letter code: Large ribosomal subunit protein uL6 (185 aa).

The protein belongs to the universal ribosomal protein uL6 family. As to quaternary structure, part of the 50S ribosomal subunit.

Functionally, this protein binds to the 23S rRNA, and is important in its secondary structure. It is located near the subunit interface in the base of the L7/L12 stalk, and near the tRNA binding site of the peptidyltransferase center. This chain is Large ribosomal subunit protein uL6, found in Deinococcus deserti (strain DSM 17065 / CIP 109153 / LMG 22923 / VCD115).